The following is a 121-amino-acid chain: Large ribosomal subunit protein uL14 (121 aa).

The protein belongs to the universal ribosomal protein uL14 family. Part of the 50S ribosomal subunit. Forms a cluster with proteins L3 and L19. In the 70S ribosome, L14 and L19 interact and together make contacts with the 16S rRNA in bridges B5 and B8.

Functionally, binds to 23S rRNA. Forms part of two intersubunit bridges in the 70S ribosome. This Legionella pneumophila (strain Corby) protein is Large ribosomal subunit protein uL14.